The following is a 431-amino-acid chain: Homogentisate 1,2-dioxygenase (431 aa).

Histidine 286 (proton acceptor) is an active-site residue. Residues histidine 329 and glutamate 335 each coordinate Fe cation. 2 residues coordinate homogentisate: tyrosine 344 and histidine 365. Histidine 365 is a binding site for Fe cation.

This sequence belongs to the homogentisate dioxygenase family. As to quaternary structure, hexamer; dimer of trimers. Requires Fe cation as cofactor.

It catalyses the reaction homogentisate + O2 = 4-maleylacetoacetate + H(+). The protein operates within amino-acid degradation; L-phenylalanine degradation; acetoacetate and fumarate from L-phenylalanine: step 4/6. Involved in the catabolism of homogentisate (2,5-dihydroxyphenylacetate or 2,5-OH-PhAc), a central intermediate in the degradation of phenylalanine and tyrosine. Catalyzes the oxidative ring cleavage of the aromatic ring of homogentisate to yield maleylacetoacetate. The protein is Homogentisate 1,2-dioxygenase of Pseudomonas fluorescens (strain Pf0-1).